Here is a 441-residue protein sequence, read N- to C-terminus: MAMKGYLDEYEKLVIRMNTPRVVIDNGVCSSATIVKVDSSRRNGILLEAVQILTDLNLSIKKAYISSDGTWNMDVFHVTDLNGNKLNDQSVLRYIEQSIETVYYGENIEVNGLTALELTGTDRIGLLSEMFAVLSDLNCDVVDAKLWTHNGRVASVIYLKDCISGAPILDSHRISKIEGRLKNVLNGDNDVNSAAKTCVTVDSMMHIERRLHQLMFEDRDYERRSKKHERSPMVVVTVQNWAERGYSVVNVHCRDRTKLLFDVVCTLTDMEYAVFHATINTAEDQAHLEFYIRHKDGSPISSEAERQRVIQCLEAAVERRALEGVRLELRHPDKQGLLAEVTRTFRENGLNVTRTEISTSSDMATNIFYVTDANGDEPDFKLIESVREKIGLECLRVKEMPTMYHKKGDGEEQQQTKAVLVSLGSLVWRNLFNFGLIKSCS.

4 ACT domains span residues 34-110 (IVKV…NIEV), 115-196 (ALEL…SAAK), 248-324 (VVNV…ALEG), and 326-405 (RLEL…TMYH).

Expressed in roots, leaves, flowers and siliques.

May bind amino acids. The polypeptide is ACT domain-containing protein ACR8 (Arabidopsis thaliana (Mouse-ear cress)).